The primary structure comprises 142 residues: MAKKVVALIKLQVKAGQANPAPPVGPALGQRGLNIMEFCKAFNAATSKLEPGLPTPVIITAYSDRTFTFITKSTPASVLLKKAAGVSSGSKRPNTDKVGKVTRKQLEEIVKVKEADLTAAELEAAVRTIAGSARSMGLTVEG.

This sequence belongs to the universal ribosomal protein uL11 family. As to quaternary structure, part of the ribosomal stalk of the 50S ribosomal subunit. Interacts with L10 and the large rRNA to form the base of the stalk. L10 forms an elongated spine to which L12 dimers bind in a sequential fashion forming a multimeric L10(L12)X complex. In terms of processing, one or more lysine residues are methylated.

Its function is as follows. Forms part of the ribosomal stalk which helps the ribosome interact with GTP-bound translation factors. The protein is Large ribosomal subunit protein uL11 of Xanthomonas campestris pv. campestris (strain 8004).